A 347-amino-acid polypeptide reads, in one-letter code: NADH-ubiquinone oxidoreductase chain 2 (347 aa).

The next 10 membrane-spanning stretches (helical) occupy residues 1–21 (MTPM…TLTL), 26–46 (WLLM…LLTY), 56–76 (AIKY…AASL), 96–116 (GIMT…YWVP), 153–171 (ILLT…NGLN), 178–198 (VMAY…IYFP), 199–219 (TLTT…FTVF), 237–257 (APIM…LPPL), 277–297 (IMAT…MRII), and 326–346 (LPTL…FITL).

It belongs to the complex I subunit 2 family. In terms of assembly, core subunit of respiratory chain NADH dehydrogenase (Complex I) which is composed of 45 different subunits. Interacts with TMEM242.

The protein localises to the mitochondrion inner membrane. It catalyses the reaction a ubiquinone + NADH + 5 H(+)(in) = a ubiquinol + NAD(+) + 4 H(+)(out). In terms of biological role, core subunit of the mitochondrial membrane respiratory chain NADH dehydrogenase (Complex I) which catalyzes electron transfer from NADH through the respiratory chain, using ubiquinone as an electron acceptor. Essential for the catalytic activity and assembly of complex I. This chain is NADH-ubiquinone oxidoreductase chain 2, found in Ornithorhynchus anatinus (Duckbill platypus).